A 552-amino-acid polypeptide reads, in one-letter code: Kumamolisin (552 aa).

Positions M1–L17 are enriched in basic and acidic residues. The tract at residues M1–V34 is disordered. One can recognise a Peptidase S53 domain in the interval A193–S546. Active-site charge relay system residues include E266, D270, and S466. Positions 504, 505, 522, 524, and 526 each coordinate Ca(2+).

In terms of assembly, forms monomeric and dimeric crystals. Ca(2+) serves as cofactor. In terms of processing, autocatalytically processed.

Its subcellular location is the secreted. It carries out the reaction The enzyme preferentially hydrolyzes peptides having an Ala or Pro residue at P2 position and prefers such charged amino acid residues as Glu or Arg at the P2' position. In the oxidized insulin B chain, kumamolysin preferentially cleaves between Leu(15) and Tyr(16).. Its activity is regulated as follows. Inactivated at 22.4 and 37 degrees Celsius, but not at 60 degrees Celsius, by aldehyde-type inhibitors such as acetyl-Ile-Ala-Phe-CHO and acetyl-Ile-Pro-Phe-CHO. Insensitive to the known carboxyl proteinase inhibitors pepstatin, diazoacetyl-DL-norleucine methyl ester (DAN) and 1,2-epoxy-3-(p-nitrophenoxy)propane (EPNP). Not inhibited by Ala-Ala-Phe-chloromethylketone, an inhibitor of the human tripeptidyl-peptidase 1. Thermostable pepstatin-insensitive serine-carboxyl proteinase. Preferentially hydrolyzes synthetic peptides having an Ala or Pro residue at the P2 position and charged amino acids such as Glu or Arg at the P2' position. In vitro, specifically hydrolyzes the Leu-15-Tyr-16 peptide bond in oxidized insulin B-chain. Additional cleavage of oxidized insulin B-chain at Phe-25-Tyr-26 is detected at a considerably lower rate. Can hydrolyze collagen and the chromogenic substrate azocoll. Shows lower activity with albumin and casein. Shows very weak tripeptidyl peptidase activity. In Bacillus sp. (strain MN-32), this protein is Kumamolisin.